The primary structure comprises 849 residues: Protein translocase subunit SecA (849 aa).

ATP contacts are provided by residues Gln-85, 103 to 107 (GEGKT), and Asp-493. The Zn(2+) site is built by Cys-832, Cys-834, Cys-843, and His-844.

The protein belongs to the SecA family. Monomer and homodimer. Part of the essential Sec protein translocation apparatus which comprises SecA, SecYEG and auxiliary proteins SecDF. Other proteins may also be involved. Requires Zn(2+) as cofactor.

It localises to the cell membrane. It is found in the cytoplasm. It catalyses the reaction ATP + H2O + cellular proteinSide 1 = ADP + phosphate + cellular proteinSide 2.. Its function is as follows. Part of the Sec protein translocase complex. Interacts with the SecYEG preprotein conducting channel. Has a central role in coupling the hydrolysis of ATP to the transfer of proteins into and across the cell membrane, serving as an ATP-driven molecular motor driving the stepwise translocation of polypeptide chains across the membrane. In Streptococcus thermophilus (strain ATCC BAA-491 / LMD-9), this protein is Protein translocase subunit SecA.